Here is a 176-residue protein sequence, read N- to C-terminus: Adenine phosphoribosyltransferase (176 aa).

Belongs to the purine/pyrimidine phosphoribosyltransferase family. In terms of assembly, homodimer.

It localises to the cytoplasm. The catalysed reaction is AMP + diphosphate = 5-phospho-alpha-D-ribose 1-diphosphate + adenine. The protein operates within purine metabolism; AMP biosynthesis via salvage pathway; AMP from adenine: step 1/1. Functionally, catalyzes a salvage reaction resulting in the formation of AMP, that is energically less costly than de novo synthesis. The chain is Adenine phosphoribosyltransferase from Methylobacillus flagellatus (strain ATCC 51484 / DSM 6875 / VKM B-1610 / KT).